Reading from the N-terminus, the 537-residue chain is DELLA protein GAI (537 aa).

Positions 1–33 are disordered; the sequence is MKRDHQEISGSGSNPAESSSIKGKLWEEDPDAG. Positions 9 to 20 are enriched in low complexity; it reads SGSGSNPAESSS. The short motif at 37–41 is the DELLA motif element; the sequence is DELLA. The tract at residues 131–157 is disordered; the sequence is KSDPGLEITRKRAKTESSSSSSSTTTR. A compositionally biased stretch (low complexity) spans 147 to 156; that stretch reads SSSSSSSTTT. Residues 162–533 enclose the GRAS domain; it reads IDSQEAGVRL…RPLIAHLGLA (372 aa). The segment at 169 to 223 is leucine repeat I (LRI); the sequence is VRLVHTLMACAEAVQQDNLKLADALVKHIGLLASSQTGAMRKVATYFAEALARRI. A VHIID region spans residues 241-306; that stretch reads QIPFYETCPY…GGPPAFRLTG (66 aa). Positions 272–276 match the VHIID motif; that stretch reads VHVID. The tract at residues 320–352 is leucine repeat II (LRII); it reads QVGWKLAQLAERIGIEFEFRGFVANSLADLEPE. The PFYRE stretch occupies residues 364-454; the sequence is VAVNAVFELH…ELYLGRQICN (91 aa). The LXXLL motif signature appears at 372-376; sequence LHPLL. The segment at 457–533 is SAW; the sequence is ACEGMDRVER…RPLIAHLGLA (77 aa).

The protein belongs to the GRAS family. DELLA subfamily. In terms of processing, phosphorylated. Ubiquitinated. Upon GA application it is ubiquitinated, leading to its subsequent degradation.

It localises to the nucleus. In terms of biological role, probable transcriptional regulator that acts as a repressor of the gibberellin (GA) signaling pathway. Probably acts by participating in large multiprotein complexes that represses transcription of GA-inducible genes. Upon GA application, it is degraded by the proteasome, allowing the GA signaling pathway. The protein is DELLA protein GAI (GAI) of Gossypium hirsutum (Upland cotton).